Reading from the N-terminus, the 138-residue chain is ATP synthase epsilon chain (138 aa).

The protein belongs to the ATPase epsilon chain family. F-type ATPases have 2 components, CF(1) - the catalytic core - and CF(0) - the membrane proton channel. CF(1) has five subunits: alpha(3), beta(3), gamma(1), delta(1), epsilon(1). CF(0) has three main subunits: a, b and c.

Its subcellular location is the cell membrane. Produces ATP from ADP in the presence of a proton gradient across the membrane. This is ATP synthase epsilon chain from Streptococcus gordonii (strain Challis / ATCC 35105 / BCRC 15272 / CH1 / DL1 / V288).